Here is a 111-residue protein sequence, read N- to C-terminus: Vacuolar ATPase assembly integral membrane protein VMA21 (111 aa).

At 1 to 39 (MATRRIVATEKSILEKDDHIGSSPAAGEKSNITPAVPLD) the chain is on the cytoplasmic side. Residues 40-60 (VILKLLAFTLAMVVIPIGSYF) form a helical membrane-spanning segment. Over 61-73 (VTVNSIFKGNSTY) the chain is Lumenal. Residues 74–94 (AGALAAIMANVVLVAYVVVAM) form a helical membrane-spanning segment. The Cytoplasmic segment spans residues 95-111 (NEDQTEQEKAKEGKKDR). The Prevents secretion from ER signature appears at 108–111 (KKDR).

The protein belongs to the VMA21 family.

It is found in the endoplasmic reticulum membrane. The protein resides in the endoplasmic reticulum-Golgi intermediate compartment membrane. Its subcellular location is the cytoplasmic vesicle. It localises to the COPII-coated vesicle membrane. Its function is as follows. Required for the assembly of the V0 complex of the vacuolar ATPase (V-ATPase) in the endoplasmic reticulum. This Pyricularia oryzae (strain 70-15 / ATCC MYA-4617 / FGSC 8958) (Rice blast fungus) protein is Vacuolar ATPase assembly integral membrane protein VMA21.